Consider the following 292-residue polypeptide: MSMEMELFVTPEKQRQHPSVSVEKTPVRRKLIVDDDSEIGSEKKGQSRTSGGGLRQFSVMVCQKLEAKKITTYKEVADEIISDFATIKQNAEKPLNENEYNEKNIRRRVYDALNVFMALDIIARDKKEIRWKGLPITCKKDVEEVKMDRNKVMSSVQKKAAFLKELREKVSSLESLMSRNQEMVVKTQGPAEGFTLPFILLETNPHAVVEIEISEDMQLVHLDFNSTPFSVHDDAYILKLMQEQKQEQNRVSSSSSTHHQSQHSSAHSSSSSCIASGTSGPVCWNSGSIDTR.

The interval 1 to 25 (MSMEMELFVTPEKQRQHPSVSVEKT) is disordered. A DNA-binding region spans residues 51–135 (GGGLRQFSVM…KKEIRWKGLP (85 aa)). A DEF box motif is present at residues 101–135 (NEKNIRRRVYDALNVFMALDIIARDKKEIRWKGLP). Residues 163–184 (LKELREKVSSLESLMSRNQEMV) are a coiled coil. Residues 246–280 (QEQNRVSSSSSTHHQSQHSSAHSSSSSCIASGTSG) are disordered. The segment covering 252–280 (SSSSSTHHQSQHSSAHSSSSSCIASGTSG) has biased composition (low complexity).

It belongs to the E2F/DP family. Heterodimer with E2F. Interacts preferentially with E2FA and E2FB, but also with E2FC. Strongly expressed in the actively dividing tissues of the shoot apical meristem, young leaf primordia, the vascular tissues of the maturing leaf primordia and axillary buds.

The protein resides in the cytoplasm. It localises to the nucleus. Functionally, involved in the regulation of the G1/S transition. Increases the DNA binding and the transactivation activities of E2F proteins after heterodimerization. The complex DPA/E2FA promotes cell division and acts as a regulator of the endocycle. Positively regulates the activity of S phase-specific genes. The sequence is that of Transcription factor-like protein DPA (DPA) from Arabidopsis thaliana (Mouse-ear cress).